The sequence spans 100 residues: Small ribosomal subunit protein uS14c (100 aa).

It belongs to the universal ribosomal protein uS14 family. As to quaternary structure, part of the 30S ribosomal subunit.

The protein resides in the plastid. Its subcellular location is the chloroplast. Its function is as follows. Binds 16S rRNA, required for the assembly of 30S particles. This chain is Small ribosomal subunit protein uS14c, found in Vitis vinifera (Grape).